The primary structure comprises 404 residues: LL-diaminopimelate aminotransferase (404 aa).

Positions 15 and 42 each coordinate substrate. Pyridoxal 5'-phosphate contacts are provided by residues tyrosine 72, 108 to 109 (AK), tyrosine 132, asparagine 188, tyrosine 219, and 247 to 249 (SFS). 3 residues coordinate substrate: lysine 109, tyrosine 132, and asparagine 188. At lysine 250 the chain carries N6-(pyridoxal phosphate)lysine. Residues arginine 258 and asparagine 288 each coordinate pyridoxal 5'-phosphate. The substrate site is built by asparagine 288 and arginine 384.

The protein belongs to the class-I pyridoxal-phosphate-dependent aminotransferase family. LL-diaminopimelate aminotransferase subfamily. As to quaternary structure, homodimer. The cofactor is pyridoxal 5'-phosphate.

It carries out the reaction (2S,6S)-2,6-diaminopimelate + 2-oxoglutarate = (S)-2,3,4,5-tetrahydrodipicolinate + L-glutamate + H2O + H(+). It functions in the pathway amino-acid biosynthesis; L-lysine biosynthesis via DAP pathway; LL-2,6-diaminopimelate from (S)-tetrahydrodipicolinate (aminotransferase route): step 1/1. Its function is as follows. Involved in the synthesis of meso-diaminopimelate (m-DAP or DL-DAP), required for both lysine and peptidoglycan biosynthesis. Catalyzes the direct conversion of tetrahydrodipicolinate to LL-diaminopimelate. The sequence is that of LL-diaminopimelate aminotransferase from Lachnoclostridium phytofermentans (strain ATCC 700394 / DSM 18823 / ISDg) (Clostridium phytofermentans).